We begin with the raw amino-acid sequence, 695 residues long: Segment polarity protein dishevelled homolog DVL-1 (695 aa).

The region spanning 1 to 85 is the DIX domain; sequence MAETKIIYHM…RVVSWLVLAE (85 aa). The interval 89-235 is disordered; sequence SDAGSQGTDS…QRLRQTDRAS (147 aa). Basic residues predominate over residues 142–151; it reads SHRRERARRR. Residues 152–171 show a composition bias toward basic and acidic residues; sequence NRDEAARTNGHPRGDRRRDL. Positions 177–192 are enriched in low complexity; the sequence is SASTVLSSELESSSFI. A Phosphoserine modification is found at serine 194. Low complexity predominate over residues 201–214; it reads SRLSSSTEQSTSSR. A compositionally biased stretch (basic residues) spans 215-228; that stretch reads LVRKHKCRRRKQRL. Residues 251-323 enclose the PDZ domain; sequence TVTLNMERHH…NDDAVRVLRE (73 aa). Residues 425–499 enclose the DEP domain; that stretch reads PDSGLEIRDR…SEQCYYVFGD (75 aa). The span at 559–580 shows a compositional bias: low complexity; sequence SCGSGSAGSQQSEGSKSSGSTR. Positions 559 to 641 are disordered; it reads SCGSGSAGSQ…SQASAVAPGL (83 aa). Residues 622–635 are compositionally biased toward polar residues; it reads SQLSRGSSPRSQAS.

Belongs to the DSH family. In terms of assembly, interacts with CXXC4. Interacts (via PDZ domain) with TMEM88. Interacts with BRD7 and INVS. Interacts (via PDZ domain) with VANGL1 and VANGL2 (via C-terminus). Interacts (via PDZ domain) with NXN. Interacts with ARRB1; the interaction is enhanced by phosphorylation of DVL1. Interacts with CYLD. Interacts (via PDZ domain) with RYK. Self-associates (via DIX domain) and forms higher homooligomers. Interacts (via PDZ domain) with DACT1 and FZD7, where DACT1 and FZD7 compete for the same binding site. Interacts (via DEP domain) with MUSK; the interaction is direct and mediates the formation a DVL1, MUSK and PAK1 ternary complex involved in AChR clustering. Interacts with DCDC2. Interacts with FOXK2. Interacts with PKD1 (via extracellular domain). Interacts (via PDZ domain) with CCDC88C/DAPLE; competes with CCDC88C for binding to frizzled receptor FZD7 and dissociates from CCDC88C following initiation of non-canonical Wnt signaling when CCDC88C displaces DVL1 from ligand-activated FZD7. In terms of processing, ubiquitinated; undergoes both 'Lys-48'-linked ubiquitination, leading to its subsequent degradation by the ubiquitin-proteasome pathway, and 'Lys-63'-linked ubiquitination. The interaction with INVS is required for ubiquitination. Deubiquitinated by CYLD, which acts on 'Lys-63'-linked ubiquitin chains. As to expression, high levels are seen in the brain, testis and kidney, lower levels in the ovary, breast, muscle, liver and small intestine, and very low levels are seen in the spleen and thymus. A moderate level expression is seen in the heart.

It localises to the cell membrane. Its subcellular location is the cytoplasm. It is found in the cytosol. The protein localises to the cytoplasmic vesicle. Functionally, participates in Wnt signaling by binding to the cytoplasmic C-terminus of frizzled family members and transducing the Wnt signal to down-stream effectors. Plays a role both in canonical and non-canonical Wnt signaling. Plays a role in the signal transduction pathways mediated by multiple Wnt genes. Required for LEF1 activation upon WNT1 and WNT3A signaling. DVL1 and PAK1 form a ternary complex with MUSK which is important for MUSK-dependent regulation of AChR clustering during the formation of the neuromuscular junction (NMJ). The sequence is that of Segment polarity protein dishevelled homolog DVL-1 (Dvl1) from Mus musculus (Mouse).